Reading from the N-terminus, the 58-residue chain is UPF0391 membrane protein Shewmr4_2671 (58 aa).

2 helical membrane-spanning segments follow: residues 6-26 and 28-48; these read LMFL…IAGA and AGIA…SLLV.

Belongs to the UPF0391 family.

The protein resides in the cell membrane. The protein is UPF0391 membrane protein Shewmr4_2671 of Shewanella sp. (strain MR-4).